The chain runs to 243 residues: Ubiquinone/menaquinone biosynthesis C-methyltransferase UbiE (243 aa).

S-adenosyl-L-methionine-binding positions include Thr69, Asp90, and 116–117 (DA).

It belongs to the class I-like SAM-binding methyltransferase superfamily. MenG/UbiE family.

The enzyme catalyses a 2-demethylmenaquinol + S-adenosyl-L-methionine = a menaquinol + S-adenosyl-L-homocysteine + H(+). The catalysed reaction is a 2-methoxy-6-(all-trans-polyprenyl)benzene-1,4-diol + S-adenosyl-L-methionine = a 5-methoxy-2-methyl-3-(all-trans-polyprenyl)benzene-1,4-diol + S-adenosyl-L-homocysteine + H(+). It participates in quinol/quinone metabolism; menaquinone biosynthesis; menaquinol from 1,4-dihydroxy-2-naphthoate: step 2/2. The protein operates within cofactor biosynthesis; ubiquinone biosynthesis. Its function is as follows. Methyltransferase required for the conversion of demethylmenaquinol (DMKH2) to menaquinol (MKH2) and the conversion of 2-polyprenyl-6-methoxy-1,4-benzoquinol (DDMQH2) to 2-polyprenyl-3-methyl-6-methoxy-1,4-benzoquinol (DMQH2). In Cupriavidus taiwanensis (strain DSM 17343 / BCRC 17206 / CCUG 44338 / CIP 107171 / LMG 19424 / R1) (Ralstonia taiwanensis (strain LMG 19424)), this protein is Ubiquinone/menaquinone biosynthesis C-methyltransferase UbiE.